The sequence spans 270 residues: Bark lectin (270 aa).

Residues 1–15 (ISITFFLLLLNKVNS) form the signal peptide. Residues Asn60, Asn76, and Asn127 are each glycosylated (N-linked (GlcNAc...) asparagine). The Mn(2+) site is built by Glu141 and Asp143. Asp143, His145, Asn147, and Asp150 together coordinate Ca(2+). Residues Asp150 and His155 each coordinate Mn(2+). Asn201 carries N-linked (GlcNAc...) asparagine glycosylation.

It belongs to the leguminous lectin family.

GalNAc-specific lectin. In Styphnolobium japonicum (Japanese pagoda tree), this protein is Bark lectin.